The sequence spans 312 residues: Aspartate carbamoyltransferase catalytic subunit (312 aa).

Arg58 and Thr59 together coordinate carbamoyl phosphate. Lys86 is a binding site for L-aspartate. The carbamoyl phosphate site is built by Arg108, His136, and Gln139. L-aspartate contacts are provided by Arg169 and Arg223. The carbamoyl phosphate site is built by Gly264 and Pro265.

The protein belongs to the aspartate/ornithine carbamoyltransferase superfamily. ATCase family. Heterododecamer (2C3:3R2) of six catalytic PyrB chains organized as two trimers (C3), and six regulatory PyrI chains organized as three dimers (R2).

The catalysed reaction is carbamoyl phosphate + L-aspartate = N-carbamoyl-L-aspartate + phosphate + H(+). It participates in pyrimidine metabolism; UMP biosynthesis via de novo pathway; (S)-dihydroorotate from bicarbonate: step 2/3. In terms of biological role, catalyzes the condensation of carbamoyl phosphate and aspartate to form carbamoyl aspartate and inorganic phosphate, the committed step in the de novo pyrimidine nucleotide biosynthesis pathway. This chain is Aspartate carbamoyltransferase catalytic subunit, found in Desulforapulum autotrophicum (strain ATCC 43914 / DSM 3382 / VKM B-1955 / HRM2) (Desulfobacterium autotrophicum).